The following is a 1488-amino-acid chain: Chromosome partition protein MukB (1488 aa).

34–41 (GGNGAGKS) provides a ligand contact to ATP. 3 coiled-coil regions span residues 326–418 (LEAD…QYNQ), 444–472 (LDTF…QTAH), and 509–602 (RHLA…QRAP). Residues 666–783 (PGGAEDQRLN…SLPIFGRAAR (118 aa)) are flexible hinge. Coiled-coil stretches lie at residues 835–923 (EAEI…AKLE), 977–1116 (EMLS…AKAG), and 1209–1265 (VEAI…LQSV). A disordered region spans residues 1049-1074 (ADSGAEERARQRRDELHAQLSNNRSR). Basic and acidic residues predominate over residues 1051 to 1065 (SGAEERARQRRDELH).

It belongs to the SMC family. MukB subfamily. Homodimerization via its hinge domain. Binds to DNA via its C-terminal region. Interacts, and probably forms a ternary complex, with MukE and MukF via its C-terminal region. The complex formation is stimulated by calcium or magnesium. Interacts with tubulin-related protein FtsZ.

The protein localises to the cytoplasm. The protein resides in the nucleoid. Functionally, plays a central role in chromosome condensation, segregation and cell cycle progression. Functions as a homodimer, which is essential for chromosome partition. Involved in negative DNA supercoiling in vivo, and by this means organize and compact chromosomes. May achieve or facilitate chromosome segregation by condensation DNA from both sides of a centrally located replisome during cell division. The protein is Chromosome partition protein MukB of Salmonella arizonae (strain ATCC BAA-731 / CDC346-86 / RSK2980).